The primary structure comprises 477 residues: MTRIAITGGRVLTMDPERRVLEPGTVVVEDQFIAQVGSPTTSTSAAPKSSTPPGWQCSPASSTPTPTSHKSSSGVVHPMTATSSNGCTTCSIPASLPTQTTTSESEHCCTAPKPFVLASPLSSTTRTSDPTTSPAPGPPGSPFTDAGIRAIYARMYFDAPRAELEELVATIHAKAPGAVRMDESASTDHVLADLDQLITRHDRTADGRIRVWPAPAIPFMVSEKGMKAAQEIAASRTDGWTMHVSEDPIEARVHSMNAPEYLHHLGCLDDRLLAAHCVHIDSRDIRLFRQHDVKISTQPVSNSYLAAGIAPVPEMLAHGVTVGIGTDDANCNDSVNLISDMKVLALIHRAAHRDASIITPEKIIEMATIDGARCIGMADQIGSLEAGKRADIITLDLRHAQTTPAHDLAATIVFQAYGNEVNDVLVNGSVVMRDRVLSFLPTPQEEKALYDDASERSAAMLARAGLTGTRTWQTLGS.

2 stretches are compositionally biased toward low complexity: residues 38 to 73 (SPTT…KSSS) and 120 to 132 (PLSS…DPTT). Disordered regions lie at residues 38–77 (SPTT…GVVH) and 120–143 (PLSS…GSPF).

It belongs to the metallo-dependent hydrolases superfamily. ATZ/TRZ family.

It participates in xenobiotic degradation; melamine degradation. Hydrolytic deamination of the S-triazine substrate melamine. This chain is S-triazine hydrolase (trzA), found in Gordonia rubripertincta (Rhodococcus corallinus).